The primary structure comprises 344 residues: uncharacterized protein (344 aa).

The interval 95-344 (TINPEDANED…TPAKKNSKGR (250 aa)) is disordered. Basic and acidic residues predominate over residues 103 to 123 (EDAKVKNSLKLEKEEGSDEKS). A compositionally biased stretch (acidic residues) spans 135–155 (SDDESDNSNDSEESEAEDSDQ). The span at 191 to 200 (SAKNAKASKP) shows a compositional bias: low complexity. Positions 244-259 (SEDEDSGSDNSEEESE) are enriched in acidic residues. A compositionally biased stretch (basic residues) spans 265–276 (ASSKKPPSKSSK). The span at 281-314 (EDEDEDSGQSESEHSEEESNSDEDSGQSEEESEE) shows a compositional bias: acidic residues. The span at 331-344 (TAKKTPAKKNSKGR) shows a compositional bias: basic residues.

This is an uncharacterized protein from Acanthamoeba polyphaga (Amoeba).